We begin with the raw amino-acid sequence, 269 residues long: Aminoglycoside N(3)-acetyltransferase III (269 aa).

The protein belongs to the antibiotic N-acetyltransferase family.

It carries out the reaction a 2-deoxystreptamine antibiotic + acetyl-CoA = an N(3)-acetyl-2-deoxystreptamine antibiotic + CoA + H(+). Its function is as follows. Resistance to antibiotics containing the 2-deoxy-streptamine ring including gentamicin, kanamycin, tobramycin, neomycin and apramycin. The sequence is that of Aminoglycoside N(3)-acetyltransferase III (aac3-Vb) from Serratia marcescens.